A 195-amino-acid polypeptide reads, in one-letter code: Imidazoleglycerol-phosphate dehydratase (195 aa).

Belongs to the imidazoleglycerol-phosphate dehydratase family.

It is found in the cytoplasm. It catalyses the reaction D-erythro-1-(imidazol-4-yl)glycerol 3-phosphate = 3-(imidazol-4-yl)-2-oxopropyl phosphate + H2O. Its pathway is amino-acid biosynthesis; L-histidine biosynthesis; L-histidine from 5-phospho-alpha-D-ribose 1-diphosphate: step 6/9. The protein is Imidazoleglycerol-phosphate dehydratase of Thermotoga petrophila (strain ATCC BAA-488 / DSM 13995 / JCM 10881 / RKU-1).